The sequence spans 212 residues: Large ribosomal subunit protein bL25 (212 aa).

Residues 1-16 (MKTRIDLTVEPRETGK) are compositionally biased toward basic and acidic residues. The segment at 1 to 22 (MKTRIDLTVEPRETGKHNSRGL) is disordered.

It belongs to the bacterial ribosomal protein bL25 family. CTC subfamily. As to quaternary structure, part of the 50S ribosomal subunit; part of the 5S rRNA/L5/L18/L25 subcomplex. Contacts the 5S rRNA. Binds to the 5S rRNA independently of L5 and L18.

Functionally, this is one of the proteins that binds to the 5S RNA in the ribosome where it forms part of the central protuberance. The sequence is that of Large ribosomal subunit protein bL25 from Bdellovibrio bacteriovorus (strain ATCC 15356 / DSM 50701 / NCIMB 9529 / HD100).